Here is a 398-residue protein sequence, read N- to C-terminus: L-talarate/galactarate dehydratase (398 aa).

Residues 46 to 48 (DAK), 82 to 83 (KR), and Lys-195 contribute to the substrate site. Lys-197 serves as the catalytic Proton acceptor. A Mg(2+)-binding site is contributed by Asp-226. Asn-228 is a binding site for substrate. Residues Glu-252 and Glu-278 each coordinate Mg(2+). His-328 functions as the Proton donor/acceptor in the catalytic mechanism. Residue Glu-348 participates in substrate binding.

This sequence belongs to the mandelate racemase/muconate lactonizing enzyme family. As to quaternary structure, homooctamer; tetramer of dimers. Mg(2+) is required as a cofactor.

The catalysed reaction is L-altrarate = 5-dehydro-4-deoxy-D-glucarate + H2O. The enzyme catalyses galactarate = 5-dehydro-4-deoxy-D-glucarate + H2O. It carries out the reaction L-altrarate = galactarate. Its activity is regulated as follows. Competitively inhibited by tartronate. Functionally, catalyzes the efficient dehydration of both L-talarate (also called L-altrarate) and galactarate to 5-keto-4-deoxy-D-glucarate (5-KDG). Also catalyzes the epimerization of L-talarate to galactarate; epimerization occurs in competition with dehydration. Is required for the utilization of L-talarate as a carbon source. Also functions in galactarate utilization. Is not active on other acid sugars. In Salmonella typhimurium (strain LT2 / SGSC1412 / ATCC 700720), this protein is L-talarate/galactarate dehydratase.